Consider the following 433-residue polypeptide: Glucoside xylosyltransferase 1 (433 aa).

Residues 1-6 (MRRFAR) lie on the Cytoplasmic side of the membrane. A helical; Signal-anchor for type II membrane protein membrane pass occupies residues 7-29 (VALLFLGCGVCSLLYGVSQLALS). Topologically, residues 30-433 (LEQEAGGARQ…DLSVRRSKGS (404 aa)) are lumenal. A disordered region spans residues 39 to 64 (QRQARESAAPGGGRQAGSADGGEEGA). Residues Asn-69, Asn-166, Asn-271, Asn-305, and Asn-380 are each glycosylated (N-linked (GlcNAc...) asparagine).

This sequence belongs to the glycosyltransferase 8 family.

The protein localises to the membrane. It carries out the reaction 3-O-(beta-D-glucosyl)-L-seryl-[EGF-like domain protein] + UDP-alpha-D-xylose = 3-O-[alpha-D-xylosyl-(1-&gt;3)-beta-D-glucosyl]-L-seryl-[EGF-like domain protein] + UDP + H(+). In terms of biological role, glycosyltransferase which elongates the O-linked glucose attached to EGF-like repeats in the extracellular domain of Notch proteins by catalyzing the addition of xylose. The protein is Glucoside xylosyltransferase 1 (GXYLT1) of Gallus gallus (Chicken).